A 1756-amino-acid chain; its full sequence is Transposon Ty1-BR Gag-Pol polyprotein (1756 aa).

3 stretches are compositionally biased toward polar residues: residues methionine 1 to proline 10, threonine 48 to serine 60, and glutamine 127 to phenylalanine 152. Disordered regions lie at residues methionine 1–glutamine 93, proline 126–proline 173, and glycine 352–threonine 421. The segment covering threonine 153–threonine 165 has biased composition (low complexity). The interval asparagine 299–histidine 401 is RNA-binding. The segment covering asparagine 402–serine 418 has biased composition (low complexity). Phosphoserine is present on serine 416. Residue aspartate 461 is the For protease activity; shared with dimeric partner of the active site. An integrase-type zinc finger-like region spans residues asparagine 583–cysteine 640. Residues asparagine 660 to proline 835 form the Integrase catalytic domain. Aspartate 671 and aspartate 736 together coordinate Mg(2+). 2 disordered regions span residues serine 956–arginine 1088 and proline 1142–tyrosine 1173. The span at serine 960 to threonine 969 shows a compositional bias: low complexity. 2 stretches are compositionally biased toward polar residues: residues serine 1005–serine 1017 and methionine 1031–serine 1043. The segment covering lysine 1044–serine 1053 has biased composition (basic and acidic residues). Over residues tyrosine 1054 to glutamate 1082 the composition is skewed to polar residues. The short motif at lysine 1179–arginine 1213 is the Bipartite nuclear localization signal element. The 139-residue stretch at asparagine 1339–glutamine 1477 folds into the Reverse transcriptase Ty1/copia-type domain. Mg(2+)-binding residues include aspartate 1347, aspartate 1428, aspartate 1429, aspartate 1611, glutamate 1653, and aspartate 1686. The RNase H Ty1/copia-type domain maps to aspartate 1611 to lysine 1753.

In terms of assembly, the capsid protein forms a homotrimer, from which the VLPs are assembled. The protease is a homodimer, whose active site consists of two apposed aspartic acid residues. In terms of processing, initially, virus-like particles (VLPs) are composed of the structural unprocessed proteins Gag and Gag-Pol, and also contain the host initiator methionine tRNA (tRNA(i)-Met) which serves as a primer for minus-strand DNA synthesis, and a dimer of genomic Ty RNA. Processing of the polyproteins occurs within the particle and proceeds by an ordered pathway, called maturation. First, the protease (PR) is released by autocatalytic cleavage of the Gag-Pol polyprotein yielding capsid protein p45 and a Pol-p154 precursor protein. This cleavage is a prerequisite for subsequent processing of Pol-p154 at the remaining sites to release the mature structural and catalytic proteins. Maturation takes place prior to the RT reaction and is required to produce transposition-competent VLPs.

It localises to the cytoplasm. Its subcellular location is the nucleus. The enzyme catalyses DNA(n) + a 2'-deoxyribonucleoside 5'-triphosphate = DNA(n+1) + diphosphate. It carries out the reaction Endonucleolytic cleavage to 5'-phosphomonoester.. Functionally, capsid protein (CA) is the structural component of the virus-like particle (VLP), forming the shell that encapsulates the retrotransposons dimeric RNA genome. The particles are assembled from trimer-clustered units and there are holes in the capsid shells that allow for the diffusion of macromolecules. CA also has nucleocapsid-like chaperone activity, promoting primer tRNA(i)-Met annealing to the multipartite primer-binding site (PBS), dimerization of Ty1 RNA and initiation of reverse transcription. The aspartyl protease (PR) mediates the proteolytic cleavages of the Gag and Gag-Pol polyproteins after assembly of the VLP. Its function is as follows. Reverse transcriptase/ribonuclease H (RT) is a multifunctional enzyme that catalyzes the conversion of the retro-elements RNA genome into dsDNA within the VLP. The enzyme displays a DNA polymerase activity that can copy either DNA or RNA templates, and a ribonuclease H (RNase H) activity that cleaves the RNA strand of RNA-DNA heteroduplexes during plus-strand synthesis and hydrolyzes RNA primers. The conversion leads to a linear dsDNA copy of the retrotransposon that includes long terminal repeats (LTRs) at both ends. In terms of biological role, integrase (IN) targets the VLP to the nucleus, where a subparticle preintegration complex (PIC) containing at least integrase and the newly synthesized dsDNA copy of the retrotransposon must transit the nuclear membrane. Once in the nucleus, integrase performs the integration of the dsDNA into the host genome. In Saccharomyces cerevisiae (strain ATCC 204508 / S288c) (Baker's yeast), this protein is Transposon Ty1-BR Gag-Pol polyprotein (TY1B-BR).